A 137-amino-acid chain; its full sequence is Phosphoribosyl-AMP cyclohydrolase (137 aa).

Asp84 contributes to the Mg(2+) binding site. Position 85 (Cys85) interacts with Zn(2+). Positions 86 and 88 each coordinate Mg(2+). Zn(2+)-binding residues include Cys101 and Cys108.

It belongs to the PRA-CH family. As to quaternary structure, homodimer. Requires Mg(2+) as cofactor. Zn(2+) serves as cofactor.

The protein localises to the cytoplasm. It carries out the reaction 1-(5-phospho-beta-D-ribosyl)-5'-AMP + H2O = 1-(5-phospho-beta-D-ribosyl)-5-[(5-phospho-beta-D-ribosylamino)methylideneamino]imidazole-4-carboxamide. It functions in the pathway amino-acid biosynthesis; L-histidine biosynthesis; L-histidine from 5-phospho-alpha-D-ribose 1-diphosphate: step 3/9. Functionally, catalyzes the hydrolysis of the adenine ring of phosphoribosyl-AMP. The protein is Phosphoribosyl-AMP cyclohydrolase of Chlorobium chlorochromatii (strain CaD3).